The chain runs to 83 residues: High-potential iron-sulfur protein (83 aa).

The [4Fe-4S] cluster site is built by C43, C46, C61, and C75.

The protein belongs to the high-potential iron-sulfur protein (HiPIP) family. In terms of assembly, homodimer.

It localises to the periplasm. Specific class of high-redox-potential 4Fe-4S ferredoxins. Functions in anaerobic electron transport in most purple and in some other photosynthetic bacteria and in at least one genus (Paracoccus) of halophilic, denitrifying bacteria. This Marichromatium gracile (Chromatium gracile) protein is High-potential iron-sulfur protein (hip).